The primary structure comprises 149 residues: 3-dehydroquinate dehydratase (149 aa).

The active-site Proton acceptor is the Tyr-26. 3 residues coordinate substrate: Asn-77, His-83, and Asp-90. The active-site Proton donor is His-103. Residues Leu-104 to Ser-105 and Arg-114 contribute to the substrate site.

The protein belongs to the type-II 3-dehydroquinase family. As to quaternary structure, homododecamer.

The catalysed reaction is 3-dehydroquinate = 3-dehydroshikimate + H2O. The protein operates within metabolic intermediate biosynthesis; chorismate biosynthesis; chorismate from D-erythrose 4-phosphate and phosphoenolpyruvate: step 3/7. Functionally, catalyzes a trans-dehydration via an enolate intermediate. The chain is 3-dehydroquinate dehydratase from Edwardsiella ictaluri (strain 93-146).